A 1134-amino-acid chain; its full sequence is Myosin-4 (1134 aa).

Residues 110–160 enclose the Myosin N-terminal SH3-like domain; the sequence is REKLCVWCRVAANGQWHLGKIHSTSSSDDVCVMLSANDDVRTMEEIFPANP. The Myosin motor domain maps to 164–830; it reads EGVEDLTQLS…VISVLEERKK (667 aa). ATP-binding positions include 255–262 and 304–312; these read GESGAGKT and NDNSSRFGK. 2 actin-binding regions span residues 589–623 and 710–732; these read LIEK…KQHL and LFKL…KPNS. 3 consecutive IQ domains span residues 832 to 861, 855 to 884, and 891 to 920; these read VLRG…AAVI, MRNA…SAIV, and ELDA…KNKP. The tract at residues 913–939 is disordered; the sequence is STQQKNKPRNEKKKTRRKSTKRVSEDK. Over residues 918 to 933 the composition is skewed to basic residues; sequence NKPRNEKKKTRRKSTK. Residues 953–999 adopt a coiled-coil conformation; that stretch reads LADLQSRVLKVEAAIMQKEDENTALQEELQRFEERWLENETRMKSME.

It belongs to the TRAFAC class myosin-kinesin ATPase superfamily. Myosin family. Plant myosin class VIII subfamily. As to quaternary structure, homodimer.

Functionally, myosin heavy chain that is required for the cell cycle-regulated transport of various organelles and proteins for their segregation. Functions by binding with its tail domain to receptor proteins on organelles and exerting force with its N-terminal motor domain against actin filaments, thereby transporting its cargo along polarized actin cables. The sequence is that of Myosin-4 (VIII-B) from Arabidopsis thaliana (Mouse-ear cress).